The primary structure comprises 317 residues: Hydroxyacyl-CoA dehydrogenase ChsB1 (317 aa).

Leu32, Asp51, Asp82, Ile83, Asn108, Ser168, Tyr181, Lys185, and Thr215 together coordinate NAD(+). Residues Ser168, Tyr181, and Lys185 contribute to the active site.

It belongs to the short-chain dehydrogenases/reductases (SDR) family. As to quaternary structure, homodimer, with 1 active site on each face.

It catalyses the reaction (22S)-hydroxy-3-oxo-chol-4-ene-24-oyl-CoA + NAD(+) = 3,22-dioxochol-4-en-24-oyl-CoA + NADH + H(+). It participates in steroid metabolism; cholesterol degradation. In terms of biological role, a reversible dehydrogenase involved in cholesterol side-chain degradation. Catalyzes the oxidation of hydroxyl-cholesterol-CoA ester metabolic intermediate (22S)-HOCO-CoA (3-oxo-chol-4-ene-(22S)-hydroxy-24-oyl-CoA), the product of ChsH3, has no activity on (22R)-HOCO-CoA (the product of EchA19). Also acts on (3R)-hydroxyoctanoyl-CoA and 17-beta-hydroxyandrost-4-en-3-one, but not on 7-alpha-hydroxyandrost-4-en-3-one, uses NAD(+) but not NADP(+). This is Hydroxyacyl-CoA dehydrogenase ChsB1 from Mycobacterium tuberculosis (strain ATCC 25618 / H37Rv).